The sequence spans 492 residues: Protein odr-4 homolog (492 aa).

The tract at residues 251–270 is disordered; sequence LQPTSTTGGTATASSNTTDS. Residues 254-268 show a composition bias toward low complexity; it reads TSTTGGTATASSNTT. A helical membrane pass occupies residues 469–489; the sequence is MVGIAVALLVLLSSVALHFVL.

Belongs to the ODR-4 family.

It is found in the membrane. Its function is as follows. May play a role in the trafficking of a subset of G-protein coupled receptors. This chain is Protein odr-4 homolog, found in Drosophila melanogaster (Fruit fly).